Here is an 890-residue protein sequence, read N- to C-terminus: Translation initiation factor IF-2 (890 aa).

The interval 110 to 216 (ISKPISKAPQ…KKPLIKTQDH (107 aa)) is disordered. Basic residues predominate over residues 135 to 148 (VPKRKGLVIIKKKR). The span at 184–199 (KSYNEPKNKENDDIKK) shows a compositional bias: basic and acidic residues. Over residues 200–210 (QKVKKEKKKPL) the composition is skewed to basic residues. A tr-type G domain is found at 387-554 (TRPPVVTIMG…NILLQAEILE (168 aa)). Residues 396–403 (GHVDHGKT) form a G1 region. 396 to 403 (GHVDHGKT) provides a ligand contact to GTP. Residues 421-425 (GITQH) form a G2 region. A G3 region spans residues 442-445 (DTPG). GTP-binding positions include 442 to 446 (DTPGH) and 496 to 499 (NKMD). The tract at residues 496 to 499 (NKMD) is G4. Positions 532–534 (SAR) are G5.

Belongs to the TRAFAC class translation factor GTPase superfamily. Classic translation factor GTPase family. IF-2 subfamily.

Its subcellular location is the cytoplasm. Functionally, one of the essential components for the initiation of protein synthesis. Protects formylmethionyl-tRNA from spontaneous hydrolysis and promotes its binding to the 30S ribosomal subunits. Also involved in the hydrolysis of GTP during the formation of the 70S ribosomal complex. This Aliarcobacter butzleri (strain RM4018) (Arcobacter butzleri) protein is Translation initiation factor IF-2.